A 235-amino-acid polypeptide reads, in one-letter code: Small ribosomal subunit protein uS3 (235 aa).

Positions V39–K107 constitute a KH type-2 domain. The interval A215 to K235 is disordered.

The protein belongs to the universal ribosomal protein uS3 family. As to quaternary structure, part of the 30S ribosomal subunit. Forms a tight complex with proteins S10 and S14.

Binds the lower part of the 30S subunit head. Binds mRNA in the 70S ribosome, positioning it for translation. The sequence is that of Small ribosomal subunit protein uS3 from Haemophilus influenzae (strain PittEE).